Reading from the N-terminus, the 313-residue chain is Porphobilinogen deaminase (313 aa).

Cys242 carries the post-translational modification S-(dipyrrolylmethanemethyl)cysteine.

The protein belongs to the HMBS family. As to quaternary structure, monomer. Dipyrromethane is required as a cofactor.

The enzyme catalyses 4 porphobilinogen + H2O = hydroxymethylbilane + 4 NH4(+). Its pathway is porphyrin-containing compound metabolism; protoporphyrin-IX biosynthesis; coproporphyrinogen-III from 5-aminolevulinate: step 2/4. Tetrapolymerization of the monopyrrole PBG into the hydroxymethylbilane pre-uroporphyrinogen in several discrete steps. This Pectobacterium atrosepticum (strain SCRI 1043 / ATCC BAA-672) (Erwinia carotovora subsp. atroseptica) protein is Porphobilinogen deaminase.